A 614-amino-acid chain; its full sequence is Zinc finger protein 276 (614 aa).

Residues 1 to 50 (MKRDRLGRFLSPGSSRQCGASDGGGGVSRTRGRPSLSGGPRVDGATARRA) are disordered. One can recognise a ZAD domain in the interval 77–163 (GHCRLCHGKF…LQRVNASPAG (87 aa)). Positions 79, 82, 136, and 139 each coordinate Zn(2+). A disordered region spans residues 268–420 (APRLPQHRGW…KKPGPKPGWK (153 aa)). A compositionally biased stretch (acidic residues) spans 357 to 369 (SDLSEGDVLSEDE). The span at 386–408 (YPERKVSGKKSESKEAKKSEEPR) shows a compositional bias: basic and acidic residues. Residues 409-420 (IRKKPGPKPGWK) are compositionally biased toward basic residues. C2H2-type zinc fingers lie at residues 434–458 (YKCPYQGCTAVYRGADGMKKHIKEH), 465–490 (RPCPHPGCNKVFMIDRYLQRHVKLIH), 496–518 (YICDECGQTFKQRKHLLVHQMRH), 524–546 (LQCEVCGFQCRQRASLKYHMTKH), and 554–577 (FACDQCGRRFEKAHNLNVHMSMVH). Positions 583-614 (QDKALPLEAEPPPGPPSPSVTTEGQAVKPEPT) are disordered. Pro residues predominate over residues 591-600 (AEPPPGPPSP).

The protein localises to the nucleus. Its subcellular location is the chromosome. It localises to the centromere. It is found in the kinetochore. Functionally, may be involved in transcriptional regulation. The protein is Zinc finger protein 276 (ZNF276) of Homo sapiens (Human).